The following is a 632-amino-acid chain: Lipoma-preferred partner homolog (632 aa).

Disordered stretches follow at residues 1 to 118 (MSHP…RSSL) and 135 to 249 (SSPY…RSYN). Positions 26 to 40 (THSFGTPSISVSTQQ) are enriched in polar residues. Over residues 41–53 (PPKKFAPVVAPKP) the composition is skewed to low complexity. Lys-109 carries the post-translational modification N6-acetyllysine. 2 positions are modified to phosphoserine: Ser-117 and Ser-152. The span at 144 to 160 (PGSSSSIASPPVSTPVT) shows a compositional bias: low complexity. Composition is skewed to polar residues over residues 172–182 (PLTATKKSATK) and 206–239 (SYSTASTSSRPAFNVQVKSAQPSTHYMTGSSSGQ). Residue Tyr-241 is modified to Phosphotyrosine. Arg-246 is modified (omega-N-methylarginine). Residue Lys-324 forms a Glycyl lysine isopeptide (Lys-Gly) (interchain with G-Cter in SUMO1) linkage. LIM zinc-binding domains are found at residues 434–493 (GRCA…INTL), 494–554 (EQCS…KFAP), and 555–623 (RCSV…RIRV).

The protein belongs to the zyxin/ajuba family. As to quaternary structure, interacts with PDZ domains of SCRIB, with VASP and with ACTN1/alpha-actinin.

It localises to the nucleus. The protein resides in the cytoplasm. Its subcellular location is the cell junction. May play a structural role at sites of cell adhesion in maintaining cell shape and motility. In addition to these structural functions, it may also be implicated in signaling events and activation of gene transcription. May be involved in signal transduction from cell adhesion sites to the nucleus allowing successful integration of signals arising from soluble factors and cell-cell adhesion. Also suggested to serve as a scaffold protein upon which distinct protein complexes are assembled in the cytoplasm and in the nucleus. This Rattus norvegicus (Rat) protein is Lipoma-preferred partner homolog (Lpp).